The following is a 77-amino-acid chain: Putative Fis-like DNA-binding protein (77 aa).

Positions 53–72 (QSLAADYLGINRNTLRKKLQ) form a DNA-binding region, H-T-H motif.

It belongs to the transcriptional regulatory Fis family.

The chain is Putative Fis-like DNA-binding protein from Ralstonia nicotianae (strain ATCC BAA-1114 / GMI1000) (Ralstonia solanacearum).